We begin with the raw amino-acid sequence, 636 residues long: Protein SOSEKI 2 (636 aa).

The segment at 9–103 is DIX-like oligomerization domain; the sequence is HKIEVIYLLS…YVLKALEVMD (95 aa). Disordered stretches follow at residues 164–188, 281–304, 340–393, and 499–524; these read VHNN…SRVP, HGRL…TVDI, VEGS…TSAK, and LGSG…VSRP. 2 stretches are compositionally biased toward polar residues: residues 375 to 390 and 499 to 510; these read SSKS…TYET and LGSGQASESFSP.

This sequence belongs to the SOSEKI family. Homodimer. Forms long polymer filaments with other SOKs proteins polymers crucial for polar localization and biological activity.

It is found in the cell membrane. SOSEKI proteins locally interpret global polarity cues and can influence cell division orientation to coordinate cell polarization relative to body axes. This Physcomitrium patens (Spreading-leaved earth moss) protein is Protein SOSEKI 2.